Here is an 880-residue protein sequence, read N- to C-terminus: Alanine--tRNA ligase (880 aa).

Residues 414–443 (TVDESEFESEMEKQRNRARKARSGGDTEGW) form a disordered region. The Zn(2+) site is built by H566, H570, C668, and H672.

It belongs to the class-II aminoacyl-tRNA synthetase family. Zn(2+) is required as a cofactor.

The protein localises to the cytoplasm. The enzyme catalyses tRNA(Ala) + L-alanine + ATP = L-alanyl-tRNA(Ala) + AMP + diphosphate. In terms of biological role, catalyzes the attachment of alanine to tRNA(Ala) in a two-step reaction: alanine is first activated by ATP to form Ala-AMP and then transferred to the acceptor end of tRNA(Ala). Also edits incorrectly charged Ser-tRNA(Ala) and Gly-tRNA(Ala) via its editing domain. The sequence is that of Alanine--tRNA ligase from Alkaliphilus metalliredigens (strain QYMF).